The following is a 406-amino-acid chain: Phosphopentomutase (406 aa).

Residues D10, D305, H310, D346, H347, and H358 each coordinate Mn(2+).

The protein belongs to the phosphopentomutase family. It depends on Mn(2+) as a cofactor.

The protein resides in the cytoplasm. The catalysed reaction is 2-deoxy-alpha-D-ribose 1-phosphate = 2-deoxy-D-ribose 5-phosphate. It carries out the reaction alpha-D-ribose 1-phosphate = D-ribose 5-phosphate. Its pathway is carbohydrate degradation; 2-deoxy-D-ribose 1-phosphate degradation; D-glyceraldehyde 3-phosphate and acetaldehyde from 2-deoxy-alpha-D-ribose 1-phosphate: step 1/2. Isomerase that catalyzes the conversion of deoxy-ribose 1-phosphate (dRib-1-P) and ribose 1-phosphate (Rib-1-P) to deoxy-ribose 5-phosphate (dRib-5-P) and ribose 5-phosphate (Rib-5-P), respectively. In Rhizobium etli (strain ATCC 51251 / DSM 11541 / JCM 21823 / NBRC 15573 / CFN 42), this protein is Phosphopentomutase.